The following is a 505-amino-acid chain: ATP synthase subunit alpha, chloroplastic (505 aa).

Gly170–Thr177 is a binding site for ATP.

The protein belongs to the ATPase alpha/beta chains family. As to quaternary structure, F-type ATPases have 2 components, CF(1) - the catalytic core - and CF(0) - the membrane proton channel. CF(1) has five subunits: alpha(3), beta(3), gamma(1), delta(1), epsilon(1). CF(0) has four main subunits: a, b, b' and c.

It localises to the plastid. It is found in the chloroplast thylakoid membrane. The catalysed reaction is ATP + H2O + 4 H(+)(in) = ADP + phosphate + 5 H(+)(out). Functionally, produces ATP from ADP in the presence of a proton gradient across the membrane. The alpha chain is a regulatory subunit. The sequence is that of ATP synthase subunit alpha, chloroplastic from Oenothera parviflora (Small-flowered evening primrose).